Here is a 1012-residue protein sequence, read N- to C-terminus: DNA polymerase catalytic subunit (1012 aa).

The protein belongs to the DNA polymerase type-B family.

It localises to the host nucleus. It carries out the reaction DNA(n) + a 2'-deoxyribonucleoside 5'-triphosphate = DNA(n+1) + diphosphate. This is DNA polymerase catalytic subunit (U38) from Homo sapiens (Human).